The primary structure comprises 892 residues: Nitrogen assimilation transcription factor nirA (892 aa).

The interval 1-32 (MGEKLDPELSSDGPHTKSSSKGQGTSTDNAPA) is disordered. Over residues 16 to 27 (TKSSSKGQGTST) the composition is skewed to low complexity. Residues 42 to 70 (CIACRRRKSKCDGNLPSCAACSSVYHTTC) constitute a DNA-binding region (zn(2)-C6 fungal-type). Disordered regions lie at residues 646–714 (GPWD…SGPV), 731–761 (AHNE…SAQE), and 842–892 (PNIP…SFQR). Positions 649 to 674 (DQAASPSTTSDSPPSVSSQSVVATTD) are enriched in low complexity. Polar residues-rich tracts occupy residues 675–714 (LSQP…SGPV), 746–761 (VSTS…SAQE), and 876–892 (NVNS…SFQR).

The protein resides in the nucleus. Functionally, pathway-specific regulatory gene of nitrate assimilation; it activates the transcription of the genes for nitrate and nitrite reductases (niaD and niiA). The sequence is that of Nitrogen assimilation transcription factor nirA (nirA) from Emericella nidulans (strain FGSC A4 / ATCC 38163 / CBS 112.46 / NRRL 194 / M139) (Aspergillus nidulans).